We begin with the raw amino-acid sequence, 274 residues long: Nickel/cobalt efflux system RcnA (274 aa).

Residues 1–12 (MTEFTTLLQQGN) lie on the Periplasmic side of the membrane. A helical membrane pass occupies residues 13–33 (AWFFIPSAILLGALHGLEPGH). Residues 34–56 (SKTMMAAFIIAIKGTIKQAVMLG) are Cytoplasmic-facing. A helical transmembrane segment spans residues 57 to 77 (LAATISHTAVVWLIAFGGMVI). The Periplasmic segment spans residues 78–86 (SKRFTAQSA). The helical transmembrane segment at 87 to 107 (EPWLQLISAVIIISTAFWMFW) threads the bilayer. The Cytoplasmic segment spans residues 108–175 (RTWRGERNWL…DGREVTNWQI (68 aa)). The tract at residues 127-153 (HHHHDHEHHHDHGHHHHHEHGEYQDAH) is disordered. Residues 129–144 (HHDHEHHHDHGHHHHH) show a composition bias toward basic residues. The helical transmembrane segment at 176–196 (LLFGLTGGLIPCPAAITVLLI) threads the bilayer. The Periplasmic segment spans residues 197–209 (CIQLKALTLGATL). The chain crosses the membrane as a helical span at residues 210 to 230 (VVSFSIGLALTLVTVGVGAAI). At 231-251 (SVQQVAKRWSGFNTLAKRAPY) the chain is on the cytoplasmic side. The chain crosses the membrane as a helical span at residues 252 to 272 (FSSLLIGLVGVYMGVHGFMGI). Residues 273-274 (MR) are Periplasmic-facing.

The protein belongs to the NiCoT transporter (TC 2.A.52) family. RcnA subfamily.

Its subcellular location is the cell inner membrane. Functionally, efflux system for nickel and cobalt. The chain is Nickel/cobalt efflux system RcnA (rcnA) from Escherichia coli (strain K12).